Consider the following 120-residue polypeptide: uncharacterized protein (120 aa).

Residues 45 to 78 adopt a coiled-coil conformation; sequence QLISESLKIAQKDLMEVRKELRKRKIAIRETERD.

This is an uncharacterized protein from Bacillus subtilis (strain 168).